The following is a 736-amino-acid chain: Neprilysin-2 (736 aa).

Residues 1–19 lie on the Cytoplasmic side of the membrane; sequence MRPDEEDGTTKSPGSRWTR. A helical; Signal-anchor for type II membrane protein membrane pass occupies residues 20–40; the sequence is IWAIIALILLILFLLVLGAAI. At 41–736 the chain is on the extracellular side; that stretch reads YFYINYKDSS…MNPREKCRVW (696 aa). Residues 52 to 736 enclose the Peptidase M13 domain; the sequence is VCLSPGCIKT…MNPREKCRVW (685 aa). 5 disulfides stabilise this stretch: C53–C58, C76–C721, C84–C681, C142–C399, and C608–C733. Positions 103–123 form a coiled coil; sequence FENLGQDLEFALKELLDENDE. Residue H571 coordinates Zn(2+). Residue E572 is part of the active site. The Zn(2+) site is built by H575 and E633. D637 serves as the catalytic Proton donor.

It belongs to the peptidase M13 family. It depends on Zn(2+) as a cofactor. As to expression, expressed in muscle cells, GLR cells, SMB motor neurons and AIM interneurons.

The protein resides in the membrane. Required for olfactory plasticity, which is the change from positive chemotaxis to dispersal after prolonged exposure to an odorant. Thought to antagonise snet-1 by degrading excess snet-1 peptides and thus enabling olfactory plasticity. In Caenorhabditis elegans, this protein is Neprilysin-2.